Reading from the N-terminus, the 366-residue chain is Galactoside alpha-(1,2)-fucosyltransferase 1 (366 aa).

The Cytoplasmic segment spans residues 1 to 8; that stretch reads MWPLSHRH. The chain crosses the membrane as a helical; Signal-anchor for type II membrane protein span at residues 9–25; it reads LCLAFLLVCVLSAISFF. Residues 26–366 lie on the Lumenal side of the membrane; it reads LHIHQDSIRH…LSPLWTLAEP (341 aa). Asparagine 66, asparagine 302, and asparagine 328 each carry an N-linked (GlcNAc...) asparagine glycan.

It belongs to the glycosyltransferase 11 family.

It localises to the golgi apparatus. It is found in the golgi stack membrane. It carries out the reaction a beta-D-galactosyl-(1-&gt;4)-N-acetyl-beta-D-glucosaminyl derivative + GDP-beta-L-fucose = an alpha-L-Fuc-(1-&gt;2)-beta-D-Gal-(1-&gt;4)-beta-D-GlcNAc derivative + GDP + H(+). It catalyses the reaction a ganglioside GA1 + GDP-beta-L-fucose = a ganglioside Fuc-GA1 + GDP + H(+). The enzyme catalyses a beta-D-Gal-(1-&gt;3)-beta-D-GlcNAc-(1-&gt;3)-beta-D-Gal-(1-&gt;4)-beta-D-Glc-(1&lt;-&gt;1')-Cer(d18:1(4E)) + GDP-beta-L-fucose = alpha-L-fucosyl-(1-&gt;2)- beta-D-galactosyl-(1-&gt;3)-N-acetyl-beta-D-glucosaminyl-(1-&gt;3)-beta-D-galactosyl-(1-&gt;4)-beta-D-glucosyl-(1&lt;-&gt;1')-N-acylsphing-4-enine + GDP + H(+). The catalysed reaction is a neolactoside nLc4Cer(d18:1(4E)) + GDP-beta-L-fucose = a neolactoside IV(2)-alpha-Fuc-nLc4Cer(d18:1(4E)) + GDP + H(+). It carries out the reaction a ganglioside GM1 + GDP-beta-L-fucose = a ganglioside Fuc-GM1 + GDP + H(+). It catalyses the reaction beta-D-galactosyl-(1-&gt;3)-N-acetyl-D-galactosamine + GDP-beta-L-fucose = alpha-L-fucosyl-(1-&gt;2)-beta-D-galactosyl-(1-&gt;3)-N-acetyl-D-galactosamine + GDP + H(+). The protein operates within protein modification; protein glycosylation. Its function is as follows. Catalyzes the transfer of L-fucose, from a guanosine diphosphate-beta-L-fucose, to the terminal galactose residue of glycoconjugates through an alpha(1,2) linkage leading to H antigen synthesis that is an intermediate substrate in the synthesis of ABO blood group antigens. H antigen is essential for maturation of the glomerular layer of the main olfactory bulb, in cell migration and early cell-cell contacts during tumor associated angiogenesis. Preferentially fucosylates soluble lactose and to a lesser extent fucosylates glycolipids gangliosides GA1 and GM1a. This chain is Galactoside alpha-(1,2)-fucosyltransferase 1, found in Aotus nancymaae (Ma's night monkey).